The following is a 498-amino-acid chain: ATP synthase subunit beta, chloroplastic (498 aa).

172-179 (GGAGVGKT) lines the ATP pocket.

Belongs to the ATPase alpha/beta chains family. As to quaternary structure, F-type ATPases have 2 components, CF(1) - the catalytic core - and CF(0) - the membrane proton channel. CF(1) has five subunits: alpha(3), beta(3), gamma(1), delta(1), epsilon(1). CF(0) has four main subunits: a(1), b(1), b'(1) and c(9-12).

The protein localises to the plastid. Its subcellular location is the chloroplast thylakoid membrane. It catalyses the reaction ATP + H2O + 4 H(+)(in) = ADP + phosphate + 5 H(+)(out). Functionally, produces ATP from ADP in the presence of a proton gradient across the membrane. The catalytic sites are hosted primarily by the beta subunits. This chain is ATP synthase subunit beta, chloroplastic, found in Phaseolus vulgaris (Kidney bean).